We begin with the raw amino-acid sequence, 271 residues long: Putative phosphoenolpyruvate synthase regulatory protein (271 aa).

Residue 152–159 (GVSRSGKT) coordinates ADP.

The protein belongs to the pyruvate, phosphate/water dikinase regulatory protein family. PSRP subfamily.

It carries out the reaction [pyruvate, water dikinase] + ADP = [pyruvate, water dikinase]-phosphate + AMP + H(+). The catalysed reaction is [pyruvate, water dikinase]-phosphate + phosphate + H(+) = [pyruvate, water dikinase] + diphosphate. Bifunctional serine/threonine kinase and phosphorylase involved in the regulation of the phosphoenolpyruvate synthase (PEPS) by catalyzing its phosphorylation/dephosphorylation. This is Putative phosphoenolpyruvate synthase regulatory protein from Thiocapsa roseopersicina.